The following is a 207-amino-acid chain: Large ribosomal subunit protein uL4 (207 aa).

The protein belongs to the universal ribosomal protein uL4 family. As to quaternary structure, part of the 50S ribosomal subunit.

In terms of biological role, one of the primary rRNA binding proteins, this protein initially binds near the 5'-end of the 23S rRNA. It is important during the early stages of 50S assembly. It makes multiple contacts with different domains of the 23S rRNA in the assembled 50S subunit and ribosome. Functionally, forms part of the polypeptide exit tunnel. This chain is Large ribosomal subunit protein uL4, found in Pelagibacter ubique (strain HTCC1062).